The sequence spans 1029 residues: Protein translocase subunit SecA (1029 aa).

ATP-binding positions include Gln143, Gly161 to Thr165, and Asp661. Residues Glu953–Lys1029 form a disordered region. Composition is skewed to basic and acidic residues over residues Leu966–Thr975 and Pro984–Lys996. Residues Cys1015, Cys1017, Cys1026, and Cys1027 each contribute to the Zn(2+) site.

The protein belongs to the SecA family. In terms of assembly, monomer and homodimer. Part of the essential Sec protein translocation apparatus which comprises SecA, SecYEG and auxiliary proteins SecDF. Other proteins may also be involved. Zn(2+) is required as a cofactor.

It localises to the cell inner membrane. It is found in the cytoplasm. It catalyses the reaction ATP + H2O + cellular proteinSide 1 = ADP + phosphate + cellular proteinSide 2.. Its function is as follows. Part of the Sec protein translocase complex. Interacts with the SecYEG preprotein conducting channel. Has a central role in coupling the hydrolysis of ATP to the transfer of proteins into and across the cell membrane, serving as an ATP-driven molecular motor driving the stepwise translocation of polypeptide chains across the membrane. This Chlorobium phaeobacteroides (strain BS1) protein is Protein translocase subunit SecA.